Here is a 210-residue protein sequence, read N- to C-terminus: Glycerol-3-phosphate acyltransferase (210 aa).

The next 5 helical transmembrane spans lie at 4-24, 52-72, 82-102, 118-138, and 159-179; these read LIVA…IVSA, AAIL…WLTG, DTSV…PVFF, LAIN…VAFF, and FLFG…LLIW.

The protein belongs to the PlsY family. Probably interacts with PlsX.

The protein resides in the cell inner membrane. The catalysed reaction is an acyl phosphate + sn-glycerol 3-phosphate = a 1-acyl-sn-glycero-3-phosphate + phosphate. The protein operates within lipid metabolism; phospholipid metabolism. Its function is as follows. Catalyzes the transfer of an acyl group from acyl-phosphate (acyl-PO(4)) to glycerol-3-phosphate (G3P) to form lysophosphatidic acid (LPA). This enzyme utilizes acyl-phosphate as fatty acyl donor, but not acyl-CoA or acyl-ACP. The chain is Glycerol-3-phosphate acyltransferase from Paraburkholderia phymatum (strain DSM 17167 / CIP 108236 / LMG 21445 / STM815) (Burkholderia phymatum).